A 66-amino-acid chain; its full sequence is DNA-directed RNA polymerase subunit omega (66 aa).

The protein belongs to the RNA polymerase subunit omega family. The RNAP catalytic core consists of 2 alpha, 1 beta, 1 beta' and 1 omega subunit. When a sigma factor is associated with the core the holoenzyme is formed, which can initiate transcription.

The enzyme catalyses RNA(n) + a ribonucleoside 5'-triphosphate = RNA(n+1) + diphosphate. Promotes RNA polymerase assembly. Latches the N- and C-terminal regions of the beta' subunit thereby facilitating its interaction with the beta and alpha subunits. The sequence is that of DNA-directed RNA polymerase subunit omega from Bacillus licheniformis (strain ATCC 14580 / DSM 13 / JCM 2505 / CCUG 7422 / NBRC 12200 / NCIMB 9375 / NCTC 10341 / NRRL NRS-1264 / Gibson 46).